The chain runs to 163 residues: Flagellar assembly factor FliW (163 aa).

Over residues 136 to 156 the composition is skewed to basic and acidic residues; the sequence is PFFETSEKKQSGLQRLERQPE. Residues 136–163 form a disordered region; the sequence is PFFETSEKKQSGLQRLERQPEKSVPPAG.

This sequence belongs to the FliW family. In terms of assembly, interacts with translational regulator CsrA and flagellin(s).

The protein resides in the cytoplasm. Acts as an anti-CsrA protein, binds CsrA and prevents it from repressing translation of its target genes, one of which is flagellin. Binds to flagellin and participates in the assembly of the flagellum. In Geotalea uraniireducens (strain Rf4) (Geobacter uraniireducens), this protein is Flagellar assembly factor FliW.